Reading from the N-terminus, the 563-residue chain is MYDRAPRWLDLANRGSTEEHVGPGTYQVPFPKQQATGCYAPFLSLSSKKDAYVVSSDPGKAVPGPAHYNVSQAQYKIKGGRTLQNREKRFKKLISDGPGPASYDCPYLGTLCIRIRQKICRKPAVSRSLDIPSIPSSGKSHGYHLNEDDTIMRRTPPSSDKTMGPAYYNPQFDYPKASLKYKGVNFGIATGRQELLKYSGPGPGHYDIIQKRKLRYENINIKRDQEHYCYSYVPRLYEEIALQEEKKGVPGPGKYNIKSQFDHIKSMSTIVDASSLLFFPETERFEPIKSSTPAPGTYNETRTAFKVPKKRSGLFSPFGQRAARFTEDYKAHELPGPGFYDISTNIVKAQVKKPHLKKKMKTGFGSSVPRALFAVQEKAFAGPGPSDYQVVRGIHDELPNLMNKYAAFLSREERTTPVQEMSLPAPGCYDVQKSYDMSQVQHNYMPPRSSVAKQRHSSFLSAAPRCLGKISDGPGPATYNPILMKSGAIISFVKAPRRFEEFQDKFSPGPTTYELSPFFRHSLLKRTYNVTLPCSASLNREHAGHAVQKTRQKYQRERFKHPN.

STPGR repeat units lie at residues 21–34 (VGPGTYQVPFPKQQ), 63–73 (PGPAHYNVSQA), and 97–107 (GPGPASYDCPY). Positions 131 to 163 (IPSIPSSGKSHGYHLNEDDTIMRRTPPSSDKTM) are disordered. 7 STPGR repeats span residues 200–219 (GPGPGHYDIIQKRKLRYENI), 250–263 (PGPGKYNIKSQFDH), 292–321 (TPAPGTYNETRTAFKVPKKRSGLFSPFGQR), 334–353 (LPGPGFYDISTNIVKAQVKK), 423–438 (LPAPGCYDVQKSYDMS), 473–483 (GPGPATYNPIL), and 507–518 (SPGPTTYELSPF).

The sequence is that of Sperm-tail PG-rich repeat-containing protein 2 (Stpg2) from Rattus norvegicus (Rat).